The following is a 407-amino-acid chain: 1-deoxy-D-xylulose 5-phosphate reductoisomerase (407 aa).

6 residues coordinate NADPH: threonine 25, glycine 26, serine 27, isoleucine 28, asparagine 53, and asparagine 136. 1-deoxy-D-xylulose 5-phosphate is bound at residue lysine 137. Glutamate 138 contributes to the NADPH binding site. Aspartate 162 is a Mn(2+) binding site. 1-deoxy-D-xylulose 5-phosphate contacts are provided by serine 163, glutamate 164, serine 188, and histidine 211. Residue glutamate 164 coordinates Mn(2+). An NADPH-binding site is contributed by glycine 217. Residues serine 224, asparagine 229, lysine 230, and glutamate 233 each coordinate 1-deoxy-D-xylulose 5-phosphate. Glutamate 233 lines the Mn(2+) pocket.

The protein belongs to the DXR family. It depends on Mg(2+) as a cofactor. Mn(2+) serves as cofactor.

The enzyme catalyses 2-C-methyl-D-erythritol 4-phosphate + NADP(+) = 1-deoxy-D-xylulose 5-phosphate + NADPH + H(+). The protein operates within isoprenoid biosynthesis; isopentenyl diphosphate biosynthesis via DXP pathway; isopentenyl diphosphate from 1-deoxy-D-xylulose 5-phosphate: step 1/6. Its function is as follows. Catalyzes the NADPH-dependent rearrangement and reduction of 1-deoxy-D-xylulose-5-phosphate (DXP) to 2-C-methyl-D-erythritol 4-phosphate (MEP). This Rhodopseudomonas palustris (strain BisB5) protein is 1-deoxy-D-xylulose 5-phosphate reductoisomerase.